Consider the following 102-residue polypeptide: Small ribosomal subunit protein uS10 (102 aa).

It belongs to the universal ribosomal protein uS10 family. Part of the 30S ribosomal subunit.

Involved in the binding of tRNA to the ribosomes. This chain is Small ribosomal subunit protein uS10, found in Clostridium acetobutylicum (strain ATCC 824 / DSM 792 / JCM 1419 / IAM 19013 / LMG 5710 / NBRC 13948 / NRRL B-527 / VKM B-1787 / 2291 / W).